Consider the following 244-residue polypeptide: Uridylate kinase (244 aa).

18–21 provides a ligand contact to ATP; sequence KISG. An involved in allosteric activation by GTP region spans residues 26 to 31; that stretch reads GDQGYG. Residue G60 coordinates UMP. The ATP site is built by G61 and R65. Residues D80 and 141–148 contribute to the UMP site; that span reads TGNPYFTT. Residues T168, Y174, and D177 each coordinate ATP.

The protein belongs to the UMP kinase family. As to quaternary structure, homohexamer.

It is found in the cytoplasm. The enzyme catalyses UMP + ATP = UDP + ADP. The protein operates within pyrimidine metabolism; CTP biosynthesis via de novo pathway; UDP from UMP (UMPK route): step 1/1. Allosterically activated by GTP. Inhibited by UTP. Its function is as follows. Catalyzes the reversible phosphorylation of UMP to UDP. The polypeptide is Uridylate kinase (Paracoccus denitrificans (strain Pd 1222)).